A 359-amino-acid polypeptide reads, in one-letter code: Salicylate carboxymethyltransferase (359 aa).

An S-adenosyl-L-methionine-binding site is contributed by tyrosine 18. Residues tyrosine 18, 21–25 (NSFIQ), and glutamine 25 each bind substrate. S-adenosyl-L-methionine-binding positions include glycine 59, 59-60 (GC), 59-61 (GCS), asparagine 65, 96-99 (LNDL), aspartate 98, 129-131 (SFY), and 146-148 (SYS). Residues 147–151 (YSLMW) and tryptophan 151 each bind substrate. Positions 162, 248, 250, and 251 each coordinate Mg(2+). Residue tyrosine 255 coordinates substrate.

The protein belongs to the methyltransferase superfamily. SABATH family.

The catalysed reaction is salicylate + S-adenosyl-L-methionine = methyl salicylate + S-adenosyl-L-homocysteine. In terms of biological role, catalyzes the methylation of the free carboxyl end of the plant hormone salicylic acid (SA). Converts SA to SA methyl ester (MSA). The volatile compound MSA is hypothesized to act as an airborne signal that triggers defense responses in uninfected plants. MSA is an important chemoattractant for moth pollinated flowering plants. This is Salicylate carboxymethyltransferase (SAMT) from Clarkia breweri (Fairy fans).